A 486-amino-acid polypeptide reads, in one-letter code: Membrane-bound lytic murein transglycosylase F (486 aa).

Residues 1–29 (MFSPTALRPRYAKWLIATGLFLMLSGCVD) form the signal peptide. Residues 30–267 (KPNTLERVKE…RLKDRYYGHV (238 aa)) are non-LT domain. The interval 268–486 (DVLGYMGATT…SKPAQEPAPL (219 aa)) is LT domain. Residue Glu-314 is part of the active site.

This sequence in the N-terminal section; belongs to the bacterial solute-binding protein 3 family. It in the C-terminal section; belongs to the transglycosylase Slt family.

The protein resides in the cell outer membrane. It carries out the reaction Exolytic cleavage of the (1-&gt;4)-beta-glycosidic linkage between N-acetylmuramic acid (MurNAc) and N-acetylglucosamine (GlcNAc) residues in peptidoglycan, from either the reducing or the non-reducing ends of the peptidoglycan chains, with concomitant formation of a 1,6-anhydrobond in the MurNAc residue.. Murein-degrading enzyme that degrades murein glycan strands and insoluble, high-molecular weight murein sacculi, with the concomitant formation of a 1,6-anhydromuramoyl product. Lytic transglycosylases (LTs) play an integral role in the metabolism of the peptidoglycan (PG) sacculus. Their lytic action creates space within the PG sacculus to allow for its expansion as well as for the insertion of various structures such as secretion systems and flagella. The sequence is that of Membrane-bound lytic murein transglycosylase F from Pseudomonas fluorescens (strain Pf0-1).